Reading from the N-terminus, the 471-residue chain is Putative multidrug resistance protein MdtD (471 aa).

Topologically, residues 1-11 (MTDLPDSTRWQ) are periplasmic. The chain crosses the membrane as a helical span at residues 12-32 (LWIVAFGFFMQSLDTTIVNTA). Topologically, residues 33-48 (LPSMAQSLGESPLHMH) are cytoplasmic. The chain crosses the membrane as a helical span at residues 49–69 (MVIVSYVLTVAVMLPASGWLA). Residues 70–76 (DKVGVRN) are Periplasmic-facing. The chain crosses the membrane as a helical span at residues 77–97 (IFFTAIVLFTLGSLFCALSGT). The Cytoplasmic segment spans residues 98 to 101 (LNEL). Residues 102–124 (LLARALQGVGGAMMVPVGRLTVM) traverse the membrane as a helical segment. Over 125–137 (KIVPREQYMAAMT) the chain is Periplasmic. A helical transmembrane segment spans residues 138-158 (FVTLPGQVGPLLGPALGGLLV). The Cytoplasmic portion of the chain corresponds to 159–164 (EYASWH). A helical transmembrane segment spans residues 165–185 (WIFLINIPVGIIGAIATLMLM). The Periplasmic segment spans residues 186–196 (PNYTMQTRRFD). A helical transmembrane segment spans residues 197–217 (LSGFLLLAVGMAVLTLALDGS). Topologically, residues 218–224 (KGTGLSP) are cytoplasmic. The chain crosses the membrane as a helical span at residues 225–245 (LAIAGLVAVGVVALVLYLLHA). The Periplasmic portion of the chain corresponds to 246-262 (RNNNRALFSLKLFRTRT). A helical transmembrane segment spans residues 263-283 (FSLGLAGSFAGRIGSGMLPFM). The Cytoplasmic segment spans residues 284–285 (TP). The helical transmembrane segment at 286–306 (VFLQIGLGFSPFHAGLMMIPM) threads the bilayer. The Periplasmic segment spans residues 307–341 (VLGSMGMKRIVVQVVNRFGYRRVLVATTLGLSLVT). Residues 342-362 (MLFMTTALLGWYYVLPFVLFL) traverse the membrane as a helical segment. Topologically, residues 363-395 (QGMVNSTRFSSMNTLTLKDLPDNLASSGNSLLS) are cytoplasmic. Residues 396–416 (MIMQLSMSIGVTIAGLLLGLF) form a helical membrane-spanning segment. At 417–430 (GSQHVSVDSGTTQT) the chain is on the periplasmic side. A helical membrane pass occupies residues 431-451 (VFMYTWLSMAFIIALPAFIFA). Over 452-471 (RVPNDTHQNVAISRRKRSAQ) the chain is Cytoplasmic.

Belongs to the major facilitator superfamily. TCR/Tet family.

It is found in the cell inner membrane. The chain is Putative multidrug resistance protein MdtD from Escherichia coli O7:K1 (strain IAI39 / ExPEC).